A 1287-amino-acid chain; its full sequence is DNA-directed RNA polymerase 147 kDa polypeptide (1287 aa).

It belongs to the poxviridae DNA-directed RNA polymerase 147 kDa subunit family. As to quaternary structure, the DNA-dependent RNA polymerase used for intermediate and late genes expression consists of eight subunits Rpo30/OPG66, Rpo7/OPG90, Rpo22/OPG103, Rpo147/OPG105, Rpo18/OPG119, Rpo19/OPG131, Rpo132/OPG151 and Rpo35/OPG156. The same holoenzyme, with the addition of the transcription-specificity factor OPG109, is used for early gene expression.

Its subcellular location is the virion. The catalysed reaction is RNA(n) + a ribonucleoside 5'-triphosphate = RNA(n+1) + diphosphate. Part of the DNA-dependent RNA polymerase which catalyzes the transcription of viral DNA into RNA using the four ribonucleoside triphosphates as substrates. Responsible for the transcription of early, intermediate and late genes. DNA-dependent RNA polymerase associates with the early transcription factor (ETF), itself composed of OPG118 and OPG133, thereby allowing the early genes transcription. Late transcription, and probably also intermediate transcription, require newly synthesized RNA polymerase. This Bos taurus (Bovine) protein is DNA-directed RNA polymerase 147 kDa polypeptide (OPG105).